We begin with the raw amino-acid sequence, 141 residues long: Hemoglobin subunit alpha-A (141 aa).

The 141-residue stretch at 1-141 (VLSAADKNNV…VGNVLTAKYR (141 aa)) folds into the Globin domain. His58 contacts O2. Residue His87 coordinates heme b.

Belongs to the globin family. As to quaternary structure, heterotetramer of two alpha chains and two beta chains. In terms of tissue distribution, red blood cells.

Functionally, involved in oxygen transport from the lung to the various peripheral tissues. This is Hemoglobin subunit alpha-A (HBAA) from Francolinus pondicerianus (Grey francolin).